The sequence spans 616 residues: MPKYRSATTTHGRNMAGARALWRATGMTDSDFGKPIIAVVNSFTQFVPGHVHLRDLGKLVAEQIEASGGVAKEFNTIAVDDGIAMGHGGMLYSLPSRELIADSVEYMVNAHCADAMVCISNCDKITPGMLMASLRLNIPVIFVSGGPMEAGKTKLSDKIIKLDLVDAMIQGADPKVSDDQSNQVERSACPTCGSCSGMFTANSMNCLTEALGLSQPGNGSLLATHADRKQLFLNAGKRIVELTKRYYEQNDESALPRNIASKAAFENAMTLDIAMGGSTNTVLHLLAAAQEAEIDFTMSDIDKLSRKVPQLCKVAPSTQKYHMEDVHRAGGVLGILGELDRAGLLNCNVKNVLGLTLPQTLEQYDITVTQDEAVKKMFRAGPAGIRTTQAFSQDCRWDSLDDDRAAGCIRSLEYAYSKDGGLAVLYGNFAENGCIVKTAGVDDSILKFTGPAKVYESQDDAVEAILGGKVVEGDVVVIRYEGPKGGPGMQEMLYPTSFLKSMGLGKACALITDGRFSGGTSGLSIGHVSPEAASGGTIALIEDGDTIAIDIPNRSIQLQLNEAEIAARREAQEARGDKAWTPKNRQRQVSFALRAYASLATSADKGAVRDKSKLGG.

Position 81 (aspartate 81) interacts with Mg(2+). Cysteine 122 provides a ligand contact to [2Fe-2S] cluster. The Mg(2+) site is built by aspartate 123 and lysine 124. Residue lysine 124 is modified to N6-carboxylysine. Cysteine 195 serves as a coordination point for [2Fe-2S] cluster. Residue glutamate 491 coordinates Mg(2+). Serine 517 (proton acceptor) is an active-site residue.

It belongs to the IlvD/Edd family. Homodimer. [2Fe-2S] cluster serves as cofactor. The cofactor is Mg(2+).

It carries out the reaction (2R)-2,3-dihydroxy-3-methylbutanoate = 3-methyl-2-oxobutanoate + H2O. It catalyses the reaction (2R,3R)-2,3-dihydroxy-3-methylpentanoate = (S)-3-methyl-2-oxopentanoate + H2O. Its pathway is amino-acid biosynthesis; L-isoleucine biosynthesis; L-isoleucine from 2-oxobutanoate: step 3/4. The protein operates within amino-acid biosynthesis; L-valine biosynthesis; L-valine from pyruvate: step 3/4. Its function is as follows. Functions in the biosynthesis of branched-chain amino acids. Catalyzes the dehydration of (2R,3R)-2,3-dihydroxy-3-methylpentanoate (2,3-dihydroxy-3-methylvalerate) into 2-oxo-3-methylpentanoate (2-oxo-3-methylvalerate) and of (2R)-2,3-dihydroxy-3-methylbutanoate (2,3-dihydroxyisovalerate) into 2-oxo-3-methylbutanoate (2-oxoisovalerate), the penultimate precursor to L-isoleucine and L-valine, respectively. This is Dihydroxy-acid dehydratase from Salmonella dublin (strain CT_02021853).